Here is a 339-residue protein sequence, read N- to C-terminus: Transcription initiation factor IIB (339 aa).

Residues E39–Q70 form a TFIIB-type zinc finger. The Zn(2+) site is built by C43, C46, C62, and C65. Repeat copies occupy residues S156–L239 and D250–E331.

This sequence belongs to the TFIIB family.

Functionally, stabilizes TBP binding to an archaeal box-A promoter. Also responsible for recruiting RNA polymerase II to the pre-initiation complex (DNA-TBP-TFIIB). The polypeptide is Transcription initiation factor IIB (Methanothermococcus thermolithotrophicus (Methanococcus thermolithotrophicus)).